The chain runs to 299 residues: GTPase Era (299 aa).

In terms of domain architecture, Era-type G spans 4-171; the sequence is KSGFVAILGR…MEILKENLDE (168 aa). The interval 12–19 is G1; it reads GRPNVGKS. 12 to 19 is a binding site for GTP; the sequence is GRPNVGKS. The segment at 38–42 is G2; the sequence is QTTRN. Residues 59–62 are G3; it reads DTPG. GTP is bound by residues 59 to 63 and 121 to 124; these read DTPGI and NKID. The interval 121 to 124 is G4; the sequence is NKID. Positions 150–152 are G5; that stretch reads ISA. A KH type-2 domain is found at 202–280; that stretch reads TREEIPHSVA…FLETWVKVKK (79 aa).

This sequence belongs to the TRAFAC class TrmE-Era-EngA-EngB-Septin-like GTPase superfamily. Era GTPase family. As to quaternary structure, monomer.

The protein localises to the cytoplasm. It localises to the cell membrane. An essential GTPase that binds both GDP and GTP, with rapid nucleotide exchange. Plays a role in 16S rRNA processing and 30S ribosomal subunit biogenesis and possibly also in cell cycle regulation and energy metabolism. In Streptococcus suis (strain 98HAH33), this protein is GTPase Era.